The following is a 338-amino-acid chain: Tetraacyldisaccharide 4'-kinase (338 aa).

ATP is bound at residue 65 to 72 (TVGGTGKT).

Belongs to the LpxK family.

The catalysed reaction is a lipid A disaccharide + ATP = a lipid IVA + ADP + H(+). Its pathway is glycolipid biosynthesis; lipid IV(A) biosynthesis; lipid IV(A) from (3R)-3-hydroxytetradecanoyl-[acyl-carrier-protein] and UDP-N-acetyl-alpha-D-glucosamine: step 6/6. Functionally, transfers the gamma-phosphate of ATP to the 4'-position of a tetraacyldisaccharide 1-phosphate intermediate (termed DS-1-P) to form tetraacyldisaccharide 1,4'-bis-phosphate (lipid IVA). This chain is Tetraacyldisaccharide 4'-kinase, found in Paraburkholderia xenovorans (strain LB400).